The following is a 304-amino-acid chain: Glutaminase (304 aa).

Residues S63, N114, E158, N165, Y189, Y240, and V258 each coordinate substrate.

It belongs to the glutaminase family. As to quaternary structure, homotetramer.

It catalyses the reaction L-glutamine + H2O = L-glutamate + NH4(+). This is Glutaminase from Shewanella putrefaciens (strain CN-32 / ATCC BAA-453).